A 2058-amino-acid chain; its full sequence is Protein Daple (2058 aa).

The region spanning 11-131 (HFLESPLVTW…KILLLMLGCA (121 aa)) is the Calponin-homology (CH) domain. 5 coiled-coil regions span residues 195 to 221 (HLKR…DYLQ), 247 to 428 (EDKK…SMNE), 455 to 1016 (ELNE…LRGA), 1043 to 1082 (ELLK…NLNL), and 1108 to 1388 (ANLQ…KFYD). Disordered stretches follow at residues 1406 to 1444 (LIKP…MRPL), 1480 to 1592 (HRMS…EDMI), 1617 to 1655 (TKNR…PGSE), 1696 to 1724 (LHPS…LPSA), 1831 to 1857 (YSAT…RGNS), 1940 to 1959 (LALP…ASSL), and 1988 to 2051 (PVRP…PQTV). Residues 1409–1418 (PKKEPSRESV) show a composition bias toward basic and acidic residues. The segment covering 1419-1429 (KSPTDVQSKTM) has biased composition (polar residues). Positions 1494–1506 (GPEHLSRSRRMES) are enriched in basic and acidic residues. Positions 1552 to 1577 (NAGSSRVPWTSSLEVSRSASNSSSPL) are enriched in polar residues. 2 consecutive short sequence motifs (GBA) follow at residues 1653 to 1675 (GSEM…PSRR) and 1676 to 1697 (HSLN…ETLH). Over residues 1831-1841 (YSATSSSQSPE) the composition is skewed to polar residues. A compositionally biased stretch (low complexity) spans 2039-2048 (PASPDPSADP). Residues 2055 to 2058 (YGCV) carry the PDZ-binding motif.

The protein belongs to the CCDC88 family. In terms of assembly, interacts with dvl2/dsh via the PDZ-binding motif. In terms of tissue distribution, expressed weakly in gastrulae, with slightly stronger expression in the dorsal region. In neurulae, expressed in the neural plate with strong expression in the presumptive mesencephalic region. At the tailbud stage, expressed in somatic cells and in part of the tail. Also strongly expressed in regions of the head including eye vesicles, otic vesicles, olfactory placode and the pharyngeal cavity.

The protein localises to the cytoplasm. Its subcellular location is the cell junction. Its function is as follows. Positive regulator of Wnt signaling, acting synergistically with dvl2/dsh. Functions upstream of ctnnb1/beta-catenin in the canonical Wnt pathway, and also activates jnk in the Wnt/planar cell polarity (PCP) pathway. Acts as a non-receptor guanine nucleotide exchange factor which binds to and activates guanine nucleotide-binding protein G(i) alpha subunits. This promotes apical cell constriction and subsequent bending of the neural plate during neurulation via arhgef18. The polypeptide is Protein Daple (ccdc88c) (Xenopus laevis (African clawed frog)).